Consider the following 319-residue polypeptide: MDKYPFLREAGSSFKDRDVTKMSDLIATWDGQDIKGPALIGVPLSKSSISHSGASFAPGTIRQALKHSSAYSAELGEHVVSELLYDLGDIDIHVTDIVKSHHHIFQTMHALLSDHPDWVPLILGGDNSISYSTIKAIAQTKGTTAVIQFDAHHDVRNTEDGGPTNGTPFRRLLDEEIIEGQHLIQLGIREFSNSQAYEAYAKKHNVNIHTMDMIREKGLIPTIKEILPVVQDKTDFIFISVDMDVLDQSHAPGCPAIGPGGLYTDELLEAVKYIAQQPNVAGIEIVEVDPTLDFRDMTSRAAAHVLLHALKGMKLSPFK.

Residues Asn127, Asp150, His152, Asp154, Asp242, and Asp244 each contribute to the Mn(2+) site.

Belongs to the arginase family. The cofactor is Mn(2+).

The catalysed reaction is N-formimidoyl-L-glutamate + H2O = formamide + L-glutamate. Its pathway is amino-acid degradation; L-histidine degradation into L-glutamate; L-glutamate from N-formimidoyl-L-glutamate (hydrolase route): step 1/1. Catalyzes the conversion of N-formimidoyl-L-glutamate to L-glutamate and formamide. The chain is Formimidoylglutamase from Bacillus subtilis (strain 168).